Consider the following 390-residue polypeptide: Chorismate synthase (390 aa).

Positions 48 and 54 each coordinate NADP(+). Residues 125–127, 238–239, glycine 278, 293–297, and arginine 319 contribute to the FMN site; these read RSS, NA, and KPTSS. Positions 360–390 are disordered; the sequence is KVPGNIINPTNPVTTQPDVRRAEDPEPDENS. Residues 366 to 376 are compositionally biased toward polar residues; sequence INPTNPVTTQP.

Belongs to the chorismate synthase family. Homotetramer. It depends on FMNH2 as a cofactor.

The enzyme catalyses 5-O-(1-carboxyvinyl)-3-phosphoshikimate = chorismate + phosphate. Its pathway is metabolic intermediate biosynthesis; chorismate biosynthesis; chorismate from D-erythrose 4-phosphate and phosphoenolpyruvate: step 7/7. Functionally, catalyzes the anti-1,4-elimination of the C-3 phosphate and the C-6 proR hydrogen from 5-enolpyruvylshikimate-3-phosphate (EPSP) to yield chorismate, which is the branch point compound that serves as the starting substrate for the three terminal pathways of aromatic amino acid biosynthesis. This reaction introduces a second double bond into the aromatic ring system. This Nitrosomonas eutropha (strain DSM 101675 / C91 / Nm57) protein is Chorismate synthase.